The primary structure comprises 195 residues: Peptidyl-tRNA hydrolase (195 aa).

Y17 contacts tRNA. H22 serves as the catalytic Proton acceptor. Y68, N70, and N116 together coordinate tRNA.

The protein belongs to the PTH family. Monomer.

The protein resides in the cytoplasm. The catalysed reaction is an N-acyl-L-alpha-aminoacyl-tRNA + H2O = an N-acyl-L-amino acid + a tRNA + H(+). In terms of biological role, hydrolyzes ribosome-free peptidyl-tRNAs (with 1 or more amino acids incorporated), which drop off the ribosome during protein synthesis, or as a result of ribosome stalling. Functionally, catalyzes the release of premature peptidyl moieties from peptidyl-tRNA molecules trapped in stalled 50S ribosomal subunits, and thus maintains levels of free tRNAs and 50S ribosomes. This chain is Peptidyl-tRNA hydrolase, found in Shewanella oneidensis (strain ATCC 700550 / JCM 31522 / CIP 106686 / LMG 19005 / NCIMB 14063 / MR-1).